Reading from the N-terminus, the 207-residue chain is MANYDVLKVDGTKAGSIELNDNVFGIEPNQHVLFEAINLQRASMRQGTHAVKNRSAVSGGGRKPWKQKGTGRARQGTIRAPQWRGGGIVFGPTPRSYSYKMPKKMRRLALRSALSAKVQENAFTVLESLTFDAPKTKEFKNMTTTLELPKKVLFVVEAEDVNVALSARNIPGVTVITTTGLNVLDIVHANQVVMTKGAVEKVEEVLG.

Residues 50–76 (AVKNRSAVSGGGRKPWKQKGTGRARQG) form a disordered region.

Belongs to the universal ribosomal protein uL4 family. As to quaternary structure, part of the 50S ribosomal subunit.

Its function is as follows. One of the primary rRNA binding proteins, this protein initially binds near the 5'-end of the 23S rRNA. It is important during the early stages of 50S assembly. It makes multiple contacts with different domains of the 23S rRNA in the assembled 50S subunit and ribosome. Functionally, forms part of the polypeptide exit tunnel. This chain is Large ribosomal subunit protein uL4, found in Macrococcus caseolyticus (strain JCSC5402) (Macrococcoides caseolyticum).